A 446-amino-acid polypeptide reads, in one-letter code: Tubulin beta chain (446 aa).

Residues Gln-11, Glu-69, Ser-138, Gly-142, Thr-143, Gly-144, Asn-204, and Asn-226 each contribute to the GTP site. Glu-69 lines the Mg(2+) pocket. A disordered region spans residues 423 to 446 (QQYQDATADEEEGEYEEEPAEEEQ). Over residues 429-446 (TADEEEGEYEEEPAEEEQ) the composition is skewed to acidic residues.

This sequence belongs to the tubulin family. Dimer of alpha and beta chains. A typical microtubule is a hollow water-filled tube with an outer diameter of 25 nm and an inner diameter of 15 nM. Alpha-beta heterodimers associate head-to-tail to form protofilaments running lengthwise along the microtubule wall with the beta-tubulin subunit facing the microtubule plus end conferring a structural polarity. Microtubules usually have 13 protofilaments but different protofilament numbers can be found in some organisms and specialized cells. Requires Mg(2+) as cofactor.

The protein resides in the cytoplasm. Its subcellular location is the cytoskeleton. Tubulin is the major constituent of microtubules, a cylinder consisting of laterally associated linear protofilaments composed of alpha- and beta-tubulin heterodimers. Microtubules grow by the addition of GTP-tubulin dimers to the microtubule end, where a stabilizing cap forms. Below the cap, tubulin dimers are in GDP-bound state, owing to GTPase activity of alpha-tubulin. This chain is Tubulin beta chain, found in Pleurotus sajor-caju (Oyster mushroom).